The primary structure comprises 327 residues: Alkanal monooxygenase beta chain (327 aa).

The protein belongs to the bacterial luciferase oxidoreductase family. In terms of assembly, heterodimer of an alpha and a beta chain.

It carries out the reaction a long-chain fatty aldehyde + FMNH2 + O2 = a long-chain fatty acid + hnu + FMN + H2O + 2 H(+). Light-emitting reaction in luminous bacteria. The specific role of the beta subunit is unknown, but it is absolutely required for bioluminescence activity. This is Alkanal monooxygenase beta chain (luxB) from Photorhabdus luminescens (Xenorhabdus luminescens).